We begin with the raw amino-acid sequence, 443 residues long: Xaa-Pro dipeptidase (443 aa).

5 residues coordinate Mn(2+): D244, D255, H339, E384, and E423.

Belongs to the peptidase M24B family. Bacterial-type prolidase subfamily. Requires Mn(2+) as cofactor.

It carries out the reaction Xaa-L-Pro dipeptide + H2O = an L-alpha-amino acid + L-proline. Functionally, splits dipeptides with a prolyl residue in the C-terminal position. The protein is Xaa-Pro dipeptidase of Pseudoalteromonas atlantica (strain T6c / ATCC BAA-1087).